Here is a 262-residue protein sequence, read N- to C-terminus: Probable aminoglycoside 3'-phosphotransferase (262 aa).

The active-site Proton acceptor is the Asp-187.

Belongs to the aminoglycoside phosphotransferase family.

It carries out the reaction kanamycin A + ATP = kanamycin 3'-phosphate + ADP + H(+). The chain is Probable aminoglycoside 3'-phosphotransferase (ymdC) from Lactococcus lactis subsp. lactis (strain IL1403) (Streptococcus lactis).